The primary structure comprises 930 residues: Translation initiation factor IF-2 (930 aa).

Positions 50-67 (FKPAAAPKVEAKPAAPKV) are enriched in low complexity. 2 disordered regions span residues 50–217 (FKPA…SSEE) and 260–346 (EVVP…HELP). 2 stretches are compositionally biased toward basic and acidic residues: residues 68–90 (SAEK…EAKP) and 110–125 (FKAE…AERR). Residues 129 to 141 (KGNNRDQQQNGNR) are compositionally biased toward low complexity. 2 stretches are compositionally biased toward basic and acidic residues: residues 157-167 (RDNRRFNDQAK) and 262-295 (VPEK…DGPR). Residues 309–318 (NQKNSNWNNN) show a composition bias toward low complexity. Residues 337 to 346 (VTERKFHELP) are compositionally biased toward basic and acidic residues. In terms of domain architecture, tr-type G spans 432–599 (ERPPVVTIMG…TVLLVAEIQE (168 aa)). Positions 441 to 448 (GHVDHGKT) are G1. Residue 441-448 (GHVDHGKT) coordinates GTP. Residues 466–470 (GITQH) form a G2 region. Residues 487–490 (DTPG) form a G3 region. Residues 487–491 (DTPGH) and 541–544 (NKID) contribute to the GTP site. Positions 541-544 (NKID) are G4. The segment at 577-579 (SAK) is G5.

The protein belongs to the TRAFAC class translation factor GTPase superfamily. Classic translation factor GTPase family. IF-2 subfamily.

Its subcellular location is the cytoplasm. Its function is as follows. One of the essential components for the initiation of protein synthesis. Protects formylmethionyl-tRNA from spontaneous hydrolysis and promotes its binding to the 30S ribosomal subunits. Also involved in the hydrolysis of GTP during the formation of the 70S ribosomal complex. The sequence is that of Translation initiation factor IF-2 from Streptococcus pneumoniae (strain Taiwan19F-14).